A 290-amino-acid chain; its full sequence is DegV domain-containing protein MG450 (290 aa).

A DegV domain is found at 3-289; that stretch reads IAFLVDSVSN…INSYAFLIQT (287 aa). Hexadecanoate contacts are provided by T65 and S97.

In terms of biological role, may bind long-chain fatty acids, such as palmitate, and may play a role in lipid transport or fatty acid metabolism. The polypeptide is DegV domain-containing protein MG450 (Mycoplasma genitalium (strain ATCC 33530 / DSM 19775 / NCTC 10195 / G37) (Mycoplasmoides genitalium)).